We begin with the raw amino-acid sequence, 328 residues long: 7,8-didemethyl-8-hydroxy-5-deazariboflavin synthase (328 aa).

Residues 1–242 enclose the Radical SAM core domain; the sequence is MTYSRNIFIP…PDVSIQVPPN (242 aa). [4Fe-4S] cluster is bound by residues cysteine 15, cysteine 19, and cysteine 22.

It belongs to the radical SAM superfamily. CofG family. As to quaternary structure, consists of two subunits, CofG and CofH. It depends on [4Fe-4S] cluster as a cofactor.

The catalysed reaction is 5-amino-5-(4-hydroxybenzyl)-6-(D-ribitylimino)-5,6-dihydrouracil + S-adenosyl-L-methionine = 7,8-didemethyl-8-hydroxy-5-deazariboflavin + 5'-deoxyadenosine + L-methionine + NH4(+) + H(+). It participates in cofactor biosynthesis; coenzyme F0 biosynthesis. Its function is as follows. Catalyzes the radical-mediated synthesis of 7,8-didemethyl-8-hydroxy-5-deazariboflavin from 5-amino-5-(4-hydroxybenzyl)-6-(D-ribitylimino)-5,6-dihydrouracil. The chain is 7,8-didemethyl-8-hydroxy-5-deazariboflavin synthase from Methanothermobacter thermautotrophicus (strain ATCC 29096 / DSM 1053 / JCM 10044 / NBRC 100330 / Delta H) (Methanobacterium thermoautotrophicum).